We begin with the raw amino-acid sequence, 214 residues long: Redox-sensing transcriptional repressor Rex (214 aa).

The H-T-H motif DNA-binding region spans 16-55 (IYFRYLNVLKDANKQRVSSTELSEAVQVDSATIRRDFSYF). NAD(+) is bound at residue 90–95 (GVGSLG).

Belongs to the transcriptional regulatory Rex family. Homodimer.

The protein resides in the cytoplasm. Functionally, modulates transcription in response to changes in cellular NADH/NAD(+) redox state. The polypeptide is Redox-sensing transcriptional repressor Rex (Limosilactobacillus reuteri (strain DSM 20016) (Lactobacillus reuteri)).